Here is a 79-residue protein sequence, read N- to C-terminus: Cell division protein ZapB (79 aa).

A coiled-coil region spans residues 3 to 79 (LEVFEKLEAK…QALLGRMEEV (77 aa)). Residues 36–45 (SLTQEVQSAQ) are compositionally biased toward polar residues. The interval 36-63 (SLTQEVQSAQHQREELERENNSLKEQQS) is disordered. Basic and acidic residues predominate over residues 46 to 57 (HQREELERENNS).

It belongs to the ZapB family. In terms of assembly, homodimer. The ends of the coiled-coil dimer bind to each other, forming polymers. Interacts with FtsZ.

The protein localises to the cytoplasm. Its function is as follows. Non-essential, abundant cell division factor that is required for proper Z-ring formation. It is recruited early to the divisome by direct interaction with FtsZ, stimulating Z-ring assembly and thereby promoting cell division earlier in the cell cycle. Its recruitment to the Z-ring requires functional FtsA or ZipA. This chain is Cell division protein ZapB, found in Salmonella agona (strain SL483).